The following is a 49-amino-acid chain: Small integral membrane protein 27 (49 aa).

A helical transmembrane segment spans residues 11 to 31; the sequence is WTYSLLLLAIVLLSWGFVIYA.

Its subcellular location is the membrane. The chain is Small integral membrane protein 27 from Mus musculus (Mouse).